The following is a 270-amino-acid chain: 5'-AMP-activated protein kinase subunit beta-1 (270 aa).

Residues Met-1–Asp-43 form a disordered region. The N-myristoyl glycine moiety is linked to residue Gly-2. Thr-4 is subject to Phosphothreonine. Residues Ser-5 and Ser-6 each carry the phosphoserine modification. A compositionally biased stretch (basic and acidic residues) spans Ala-9–Ile-36. Thr-19 carries the post-translational modification Phosphothreonine. A phosphoserine; by autocatalysis mark is found at Ser-24 and Ser-25. Phosphoserine is present on residues Ser-40, Ser-96, and Ser-101. The interval Glu-68–Phe-163 is glycogen-binding domain. The residue at position 108 (Ser-108) is a Phosphoserine; by autocatalysis. At Thr-148 the chain carries Phosphothreonine. Phosphoserine is present on Ser-182. At Lys-201 the chain carries N6-succinyllysine.

The protein belongs to the 5'-AMP-activated protein kinase beta subunit family. As to quaternary structure, AMPK is a heterotrimer of an alpha catalytic subunit (PRKAA1 or PRKAA2), a beta (PRKAB1 or PRKAB2) and a gamma non-catalytic subunits (PRKAG1, PRKAG2 or PRKAG3). Interacts with FNIP1 and FNIP2. Phosphorylated when associated with the catalytic subunit (PRKAA1 or PRKAA2). Phosphorylated by ULK1; leading to negatively regulate AMPK activity and suggesting the existence of a regulatory feedback loop between ULK1 and AMPK. Highly expressed in kidney, heart, white adipose tissue, lung and spleen.

In terms of biological role, non-catalytic subunit of AMP-activated protein kinase (AMPK), an energy sensor protein kinase that plays a key role in regulating cellular energy metabolism. In response to reduction of intracellular ATP levels, AMPK activates energy-producing pathways and inhibits energy-consuming processes: inhibits protein, carbohydrate and lipid biosynthesis, as well as cell growth and proliferation. AMPK acts via direct phosphorylation of metabolic enzymes, and by longer-term effects via phosphorylation of transcription regulators. Also acts as a regulator of cellular polarity by remodeling the actin cytoskeleton; probably by indirectly activating myosin. Beta non-catalytic subunit acts as a scaffold on which the AMPK complex assembles, via its C-terminus that bridges alpha (PRKAA1 or PRKAA2) and gamma subunits (PRKAG1, PRKAG2 or PRKAG3). In Rattus norvegicus (Rat), this protein is 5'-AMP-activated protein kinase subunit beta-1 (Prkab1).